The sequence spans 859 residues: Auxin response factor 2 (859 aa).

Residues 1–48 (MASSEVSMKGNRGGDNFSSSGFSDPKETRNVSVAGEGQKSNSTRSAAA) form a disordered region. Residues 14–23 (GDNFSSSGFS) show a composition bias toward low complexity. Residues 164-266 (FCKTLTASDT…ELRVGVRRAM (103 aa)) constitute a DNA-binding region (TF-B3). Pro residues predominate over residues 396–407 (LAPPALSPVPMP). Disordered stretches follow at residues 396-442 (LAPP…LPAS), 687-736 (IASP…RSCT), and 829-859 (RSEEEAVVGEGSDAKDAKSASNPSLSSAGNS). 2 stretches are compositionally biased toward polar residues: residues 416–426 (IAPSSPDSSML) and 695–704 (LSDQSKGSKS). Residues 733-817 (RSCTKVHKQG…RKIFIYTKEE (85 aa)) enclose the PB1 domain. The span at 847–859 (SASNPSLSSAGNS) shows a compositional bias: polar residues.

Belongs to the ARF family. As to quaternary structure, homodimers and heterodimers. Interacts with ARF1. As to expression, expressed in the whole plant.

It is found in the nucleus. Auxin response factors (ARFs) are transcriptional factors that bind specifically to the DNA sequence 5'-TGTCTC-3' found in the auxin-responsive promoter elements (AuxREs). Could act as transcriptional activator or repressor. Formation of heterodimers with Aux/IAA proteins may alter their ability to modulate early auxin response genes expression. Promotes flowering, stamen development, floral organ abscission and fruit dehiscence. Functions independently of ethylene and cytokinin response pathways. May act as a repressor of cell division and organ growth. The sequence is that of Auxin response factor 2 (ARF2) from Arabidopsis thaliana (Mouse-ear cress).